Consider the following 374-residue polypeptide: MYFQKARLIHAELPLLAPFKTSYGELKSKDFYIIELINEEGIHGYGELEAFPLPDYTEETLSSAILIIKEQLLPLLAQRKIRKPEEIQELFSWIQGNEMAKAAVELAVWDAFAKMEKRSLAKMIGATKESIKVGVSIGLQQNVETLLQLVNQYVDQGYERVKLKIAPNKDIQFVEAVRKSFPKLSLMADANSAYNREDFLLLKELDQYDLEMIEQPFGTKDFVDHAWLQKQLKTRICLDENIRSVKDVEQAHSIGSCRAINLKLARVGGMSSALKIAEYCALNEILVWCGGMLEAGVGRAHNIALAARNEFVFPGDISASNRFFAEDIVTPAFELNQGRLKVPTNEGIGVTLDLKVLKKYTKSTEEILLNKGWS.

The active-site Proton donor is Lys-164. Mg(2+) is bound by residues Asp-189, Glu-214, and Asp-239. Catalysis depends on Lys-263, which acts as the Proton acceptor.

It belongs to the mandelate racemase/muconate lactonizing enzyme family. MenC type 2 subfamily. In terms of assembly, homodimer. A divalent metal cation serves as cofactor.

The catalysed reaction is (1R,6R)-6-hydroxy-2-succinyl-cyclohexa-2,4-diene-1-carboxylate = 2-succinylbenzoate + H2O. The protein operates within quinol/quinone metabolism; 1,4-dihydroxy-2-naphthoate biosynthesis; 1,4-dihydroxy-2-naphthoate from chorismate: step 4/7. It participates in quinol/quinone metabolism; menaquinone biosynthesis. In terms of biological role, converts 2-succinyl-6-hydroxy-2,4-cyclohexadiene-1-carboxylate (SHCHC) to 2-succinylbenzoate (OSB). Also acts as a N-succinylamino acid racemase (NSAR) that catalyzes the racemization of N-succinyl-L-phenylglycine. L.innocua has the menaquinone synthesis pathway, indicating that the species requires OSBS activity. However, the NSAR/OSBS is not encoded in the menaquinone operon, raising the possibility that both NSAR and OSBS are biological functions. This chain is o-succinylbenzoate synthase, found in Listeria innocua serovar 6a (strain ATCC BAA-680 / CLIP 11262).